Here is an 849-residue protein sequence, read N- to C-terminus: Rho guanine nucleotide exchange factor 15 (849 aa).

3 disordered regions span residues 1 to 146 (MSAQ…ASAP), 159 to 202 (GAEG…NGTP), and 277 to 308 (LPPL…LPSE). The segment covering 18–31 (RIIRPRPPSRHRAP) has biased composition (basic residues). Residues 48–59 (QISNDASASVCT) show a composition bias toward polar residues. Residues 65-110 (PPTASLKPPALLPPSVSRTSLDSQTSPDSPSSTPSPSPVSRRSISP) are compositionally biased toward low complexity. Serine 107 and serine 109 each carry phosphoserine. The segment covering 111 to 123 (EPAPCSPVPPPKP) has biased composition (pro residues). Polar residues predominate over residues 164–180 (AQSSDSLERCSQGSTEV). Tyrosine 361 carries the post-translational modification Phosphotyrosine; by EPHB2. In terms of domain architecture, DH spans 425–609 (RMQESLFEVV…SKIIERCSAE (185 aa)). Polar residues-rich tracts occupy residues 771–786 (CSEP…QSLE) and 840–849 (SSGTPDTPQP). Disordered regions lie at residues 771–803 (CSEP…GWLK) and 819–849 (GEHE…TPQP).

Interacts with EPHA4. Interacts with EPHB2. Post-translationally, phosphorylated on tyrosine residues upon EFNA1 stimulation. EPHB2-dependent phosphorylation at Tyr-361 triggers UBE3A-mediated ubiquitination. Ubiquitinated; UBE3A-mediated ubiquitination and degradation by the proteasome promotes EFNB1-dependent synapse formation. In terms of tissue distribution, at P12, expressed is detected in the CA1 region and the dentate gyrus of the hippocampus.

Its subcellular location is the cell projection. The protein resides in the dendrite. Specific GEF for RhoA activation. Does not activate RAC1 or CDC42. Regulates vascular smooth muscle contractility. Negatively regulates excitatory synapse development by suppressing the synapse-promoting activity of EPHB2. This Mus musculus (Mouse) protein is Rho guanine nucleotide exchange factor 15 (Arhgef15).